The primary structure comprises 69 residues: Protein translocase subunit SecE (69 aa).

The chain crosses the membrane as a helical span at residues 43 to 63 (GLGICLLGFVGFVIHVPITYL).

This sequence belongs to the SecE/SEC61-gamma family. As to quaternary structure, component of the Sec protein translocase complex. Heterotrimer consisting of SecY (alpha), SecG (beta) and SecE (gamma) subunits. The heterotrimers can form oligomers, although 1 heterotrimer is thought to be able to translocate proteins. Interacts with the ribosome. May interact with SecDF, and other proteins may be involved.

The protein localises to the cell membrane. Its function is as follows. Essential subunit of the Sec protein translocation channel SecYEG. Clamps together the 2 halves of SecY. May contact the channel plug during translocation. This Methanococcus maripaludis (strain DSM 14266 / JCM 13030 / NBRC 101832 / S2 / LL) protein is Protein translocase subunit SecE.